We begin with the raw amino-acid sequence, 490 residues long: UDP-N-acetylmuramate--L-alanine ligase (490 aa).

An ATP-binding site is contributed by Gly130–Thr136.

It belongs to the MurCDEF family.

Its subcellular location is the cytoplasm. It catalyses the reaction UDP-N-acetyl-alpha-D-muramate + L-alanine + ATP = UDP-N-acetyl-alpha-D-muramoyl-L-alanine + ADP + phosphate + H(+). It functions in the pathway cell wall biogenesis; peptidoglycan biosynthesis. Its function is as follows. Cell wall formation. In Idiomarina loihiensis (strain ATCC BAA-735 / DSM 15497 / L2-TR), this protein is UDP-N-acetylmuramate--L-alanine ligase.